Here is a 546-residue protein sequence, read N- to C-terminus: CTP synthase (546 aa).

The segment at 1-266 is amidoligase domain; it reads MTTNYIFVTG…DDLVCQRFGI (266 aa). S14 contacts CTP. S14 is a binding site for UTP. ATP contacts are provided by residues 15 to 20 and D72; that span reads SLGKGI. Residues D72 and E140 each coordinate Mg(2+). CTP contacts are provided by residues 147 to 149, 187 to 192, and K223; these read DIE and KTKPTQ. UTP contacts are provided by residues 187-192 and K223; that span reads KTKPTQ. Residue 239–241 coordinates ATP; sequence KDV. The region spanning 291-542 is the Glutamine amidotransferase type-1 domain; it reads VIGMVGKYIE…VKAAGESVRG (252 aa). G352 is an L-glutamine binding site. C379 serves as the catalytic Nucleophile; for glutamine hydrolysis. L-glutamine-binding positions include 380–383, E403, and R470; that span reads LGMQ. Residues H515 and E517 contribute to the active site.

This sequence belongs to the CTP synthase family. In terms of assembly, homotetramer.

It carries out the reaction UTP + L-glutamine + ATP + H2O = CTP + L-glutamate + ADP + phosphate + 2 H(+). The enzyme catalyses L-glutamine + H2O = L-glutamate + NH4(+). It catalyses the reaction UTP + NH4(+) + ATP = CTP + ADP + phosphate + 2 H(+). It participates in pyrimidine metabolism; CTP biosynthesis via de novo pathway; CTP from UDP: step 2/2. Its activity is regulated as follows. Allosterically activated by GTP, when glutamine is the substrate; GTP has no effect on the reaction when ammonia is the substrate. The allosteric effector GTP functions by stabilizing the protein conformation that binds the tetrahedral intermediate(s) formed during glutamine hydrolysis. Inhibited by the product CTP, via allosteric rather than competitive inhibition. Functionally, catalyzes the ATP-dependent amination of UTP to CTP with either L-glutamine or ammonia as the source of nitrogen. Regulates intracellular CTP levels through interactions with the four ribonucleotide triphosphates. The protein is CTP synthase of Aliivibrio fischeri (strain MJ11) (Vibrio fischeri).